The following is a 1021-amino-acid chain: MSIFSSISSLGLEACYRHHVRTSPNATAVVDGDQSMTYRELETRVNDLASILGRENIEEEEPIGILVPMGIAHVVAQAAVLRLGGSCVPMDLSFPDQRINDLLRALKTRIVLTVESEKARFAEFQTILVDSKYANLHQNGYHEDTIPAVETGRNHRTHILHTSGTTGLPKPVEIMSKGITRMAFNTQCVEFKSTDRVAQISAPSFDAALFEIWTTLARGAAIVLLPKNVVIDPVALHDSLRKYRITSILVTTALLNHVVSAIPNAFEDLDYVLTGGEAANPSVMQVILENGPPKKLVHAYGPTECTIITTYHLTTLEEVRRGQTPIGRPLDNTTVYILDDNLQPVKEGIVGELYIGGDAVARGYLGRPEANAKSFLEVSHLSKDGSPVRIYRSGDLVRMLDTGAIEFVARADNMVKIRGFRIEPAEIEGALLKSEMVQGTVVLPVHRPGKETYIVAFVIPKHDGAFSLEQLDEYLRRRLPAYMMPRLEAVASLPLTVHGKIDRVAVMKKHMEETKRAEQQVLISSNVKDAGDSVTWLRTLWTSVLGISNIDNEASFFHLGGSSLQAAALLVHIRRRFGLTLTMQQIYDSPTLLGLASVIDAGHAKSKVDHSRLGIFIADSQLAKDIPVLSKEAPDWRSPSEGKVFLTGATGFLGTYFLRELIDRPDVRSVKCLVRASDAHSARKRLLGALDKYGLGWADNLDKVTAIAGDLGKDLFGLSETEFHELALWTSVIFHVGAHVNYVQPYEKHRNTNVYGTLNCIKLATTGRTKALHYTSTAAVTGPVSHFTGADKIPEDVDLGEFQGWLPYDIGYTQSKWVSEQLIHSMIAKGLPAIVFRPGFIMGDSLRGKGNCDDFMCRVFIGSIKLGYRPILPNQSKIMIPVDFITTALLHITSNPYNFGRTFHLVPQTPEEDTDIETSWNMLKELGYDLKAVEYKDWLEILSKDKDLLTNPLLPMLPVLQEPVRKHLTRWELYEDMATYDVTNTRRSLADRGKLKSGIGLEDLRRHVEDWVARGLVPSRN.

An adenylation (A) domain region spans residues 17–418; it reads RHHVRTSPNA…ARADNMVKIR (402 aa). Positions 528 to 603 constitute a Carrier domain; that stretch reads KDAGDSVTWL…GLASVIDAGH (76 aa). Residue S563 is modified to O-(pantetheine 4'-phosphoryl)serine. The interval 646-888 is short-chain dehydrogenase/reductase (R) domain; that stretch reads LTGATGFLGT…MIPVDFITTA (243 aa).

The protein belongs to the NRP synthetase family.

It participates in secondary metabolite biosynthesis. Nonribosomal peptide synthetase; part of the gene cluster that mediates the biosynthesis of aspergillic acid, a hydroxamic acid-containing pyrazinone with aliphatic side chains that originates from leucine (Leu) and isoleucine (Ile). Aspergillic acid has antibiotic properties and was shown to be lethal to mice. The first step in the pathway is the production of deoxyaspergillic acid via a condensation between the Ile amine and the Leu carboxylic acid, followed by a reductive release from the protein forming the dipeptide aldehyde NH(2)-Leu-Ile-CHO, which could undergo an intermolecular cyclization resulting in a dihydropyrazinone. As the NRPS asaC lacks a condensation domain, it is improbable that it is responsible for condensation of Leu and Ile. One possibility is that asaC acts on a previously condensed dipeptide and functions as a Leu-Ile reductase to yield deoxyaspergillic acid. After asaC forms deoxyaspergillic acid, the cytochrome P450 asaD oxidizes the pyrazinone to the hydroxamic acid-containing bioactive metabolite aspergillic acid. The hydroxylase/desaturase asaB can then convert aspergillic acid to hydroxyaspergillic acid. Both aspergillic acid and hydroxyaspergillic acid can form complexes with iron producing ferriaspergillin analogs. The protein is Nonribosomal peptide synthetase asaC of Aspergillus flavus (strain ATCC 200026 / FGSC A1120 / IAM 13836 / NRRL 3357 / JCM 12722 / SRRC 167).